We begin with the raw amino-acid sequence, 353 residues long: Photosystem II protein D1 (353 aa).

The residue at position 2 (T2) is an N-acetylthreonine. Residue T2 is modified to Phosphothreonine. Transmembrane regions (helical) follow at residues 29 to 46 (YIGWFGVLMIPTLLTATS), 118 to 133 (HFLLGVACYMGREWEL), and 142 to 156 (WIAVAYSAPVAAATA). H118 contributes to the chlorophyll a binding site. Position 126 (Y126) interacts with pheophytin a. Residues D170 and E189 each contribute to the [CaMn4O5] cluster site. Residues 197-218 (FHMLGVAGVFGGSLFSAMHGSL) traverse the membrane as a helical segment. H198 provides a ligand contact to chlorophyll a. Residues H215 and 264-265 (SF) contribute to the a quinone site. H215 contacts Fe cation. H272 lines the Fe cation pocket. A helical membrane pass occupies residues 274–288 (FLAAWPVVGIWFTAL). 4 residues coordinate [CaMn4O5] cluster: H332, E333, D342, and A344. The propeptide occupies 345–353 (AIEAPATNG).

This sequence belongs to the reaction center PufL/M/PsbA/D family. PSII is composed of 1 copy each of membrane proteins PsbA, PsbB, PsbC, PsbD, PsbE, PsbF, PsbH, PsbI, PsbJ, PsbK, PsbL, PsbM, PsbT, PsbX, PsbY, PsbZ, Psb30/Ycf12, at least 3 peripheral proteins of the oxygen-evolving complex and a large number of cofactors. It forms dimeric complexes. The cofactor is The D1/D2 heterodimer binds P680, chlorophylls that are the primary electron donor of PSII, and subsequent electron acceptors. It shares a non-heme iron and each subunit binds pheophytin, quinone, additional chlorophylls, carotenoids and lipids. D1 provides most of the ligands for the Mn4-Ca-O5 cluster of the oxygen-evolving complex (OEC). There is also a Cl(-1) ion associated with D1 and D2, which is required for oxygen evolution. The PSII complex binds additional chlorophylls, carotenoids and specific lipids.. In terms of processing, tyr-161 forms a radical intermediate that is referred to as redox-active TyrZ, YZ or Y-Z. C-terminally processed by CTPA; processing is essential to allow assembly of the oxygen-evolving complex and thus photosynthetic growth.

It is found in the plastid membrane. It catalyses the reaction 2 a plastoquinone + 4 hnu + 2 H2O = 2 a plastoquinol + O2. In terms of biological role, photosystem II (PSII) is a light-driven water:plastoquinone oxidoreductase that uses light energy to abstract electrons from H(2)O, generating O(2) and a proton gradient subsequently used for ATP formation. It consists of a core antenna complex that captures photons, and an electron transfer chain that converts photonic excitation into a charge separation. The D1/D2 (PsbA/PsbD) reaction center heterodimer binds P680, the primary electron donor of PSII as well as several subsequent electron acceptors. The protein is Photosystem II protein D1 of Cuscuta exaltata (Tall dodder).